A 134-amino-acid chain; its full sequence is Cytochrome b (134 aa).

3 consecutive transmembrane segments (helical) span residues 33–53 (FGSL…FLAM), 77–98 (WLIR…FLHV), and 113–133 (WNMG…GYVL). Positions 83 and 97 each coordinate heme b.

This sequence belongs to the cytochrome b family. The cytochrome bc1 complex contains 11 subunits: 3 respiratory subunits (MT-CYB, CYC1 and UQCRFS1), 2 core proteins (UQCRC1 and UQCRC2) and 6 low-molecular weight proteins (UQCRH/QCR6, UQCRB/QCR7, UQCRQ/QCR8, UQCR10/QCR9, UQCR11/QCR10 and a cleavage product of UQCRFS1). This cytochrome bc1 complex then forms a dimer. It depends on heme b as a cofactor.

The protein resides in the mitochondrion inner membrane. Functionally, component of the ubiquinol-cytochrome c reductase complex (complex III or cytochrome b-c1 complex) that is part of the mitochondrial respiratory chain. The b-c1 complex mediates electron transfer from ubiquinol to cytochrome c. Contributes to the generation of a proton gradient across the mitochondrial membrane that is then used for ATP synthesis. The protein is Cytochrome b (MT-CYB) of Microtus subterraneus (European pine vole).